The primary structure comprises 592 residues: N-acetyltransferase ESCO2 (592 aa).

Phosphoserine is present on residues S41 and S85. The interval 267–294 (KSSVKVQNARSKNEEKLRKNPSGAVVSS) is disordered. S309 is subject to Phosphoserine. The CCHH-type zinc-finger motif lies at 384-408 (TVCKSCGMIYTASNPEDEIQHLQHH).

It belongs to the acetyltransferase family. ECO subfamily.

Its subcellular location is the nucleus. The protein resides in the chromosome. It carries out the reaction L-lysyl-[protein] + acetyl-CoA = N(6)-acetyl-L-lysyl-[protein] + CoA + H(+). Acetyltransferase required for the establishment of sister chromatid cohesion. Couples the processes of cohesion and DNA replication to ensure that only sister chromatids become paired together. In contrast to the structural cohesins, the deposition and establishment factors are required only during the S phase. Acetylates the cohesin component SMC3. In Mus musculus (Mouse), this protein is N-acetyltransferase ESCO2 (Esco2).